The following is a 371-amino-acid chain: Peptide chain release factor 2 (371 aa).

Residue Gln253 is modified to N5-methylglutamine.

Belongs to the prokaryotic/mitochondrial release factor family. Post-translationally, methylated by PrmC. Methylation increases the termination efficiency of RF2.

Its subcellular location is the cytoplasm. Peptide chain release factor 2 directs the termination of translation in response to the peptide chain termination codons UGA and UAA. In Mycobacterium sp. (strain JLS), this protein is Peptide chain release factor 2.